The chain runs to 1321 residues: Bile salt export pump (1321 aa).

Residues 1–62 lie on the Cytoplasmic side of the membrane; that stretch reads MSDSVILRSV…FSSWTDIWLM (62 aa). The ABC transmembrane type-1 1 domain maps to 62 to 385; the sequence is MCMGSLCACI…ASPCLEAFAA (324 aa). Residues 63 to 83 form a helical membrane-spanning segment; the sequence is CMGSLCACIHGIAQPGVLLIF. Over 84–147 the chain is Extracellular; the sequence is GTMTDVFIDY…MIRFAGYYAG (64 aa). N-linked (GlcNAc...) asparagine glycosylation is found at Asn-109, Asn-116, Asn-122, and Asn-125. A helical membrane pass occupies residues 148 to 168; sequence IGIAVLTTGYIQICFWGIAAA. At 169–215 the chain is on the cytoplasmic side; that stretch reads HQIQKMRKSYFRKIMRMGIGWVDCNSVGKLNTPFSVDFNKINDSSAD. A helical transmembrane segment spans residues 216–236; it reads QLAIFIQGMTSPIFGFLVGFS. Residues 237-240 are Extracellular-facing; sequence QWWK. A helical membrane pass occupies residues 241–261; the sequence is LTLVIISVSPLIGLGAAIIGL. Topologically, residues 262 to 319 are cytoplasmic; it reads SVSKFTDYELKAYAKAGSVADEVISSMRTVAAFGGEKKEVERYEKNLVFAQRWGIRKG. A helical membrane pass occupies residues 320–340; sequence IVMGFFTGYMWCLIFFCYALA. The Extracellular portion of the chain corresponds to 341-353; sequence FWYGSKLVLEEGE. The helical transmembrane segment at 354 to 374 threads the bilayer; sequence YSPGALVQIFLSVIIGALNLG. The Cytoplasmic portion of the chain corresponds to 375 to 755; that stretch reads NASPCLEAFA…KLNAPEWPYM (381 aa). Positions 420–656 constitute an ABC transporter 1 domain; that stretch reads IEFHNVTFHY…KGVYFALVTL (237 aa). 455 to 462 provides a ligand contact to ATP; that stretch reads GPSGAGKS. Thr-586 carries the phosphothreonine modification. At Ser-587 the chain carries Phosphoserine. An interaction with HAX1 region spans residues 651–672; sequence FALVTLQSQRNQGDQEENEKDA. The segment at 659–735 is disordered; that stretch reads QRNQGDQEEN…KDKDLPAQED (77 aa). Residues 664–677 show a composition bias toward acidic residues; sequence DQEENEKDATEDDI. Ser-690, Ser-701, and Ser-704 each carry phosphoserine. A compositionally biased stretch (basic and acidic residues) spans 714-731; sequence VEDHKSTHEEDRKDKDLP. The 289-residue stretch at 755-1043 folds into the ABC transmembrane type-1 2 domain; it reads MLLGSMGAAV…ASSYTPSYAK (289 aa). A helical membrane pass occupies residues 756–776; that stretch reads LLGSMGAAVNGAVTPLYAFLF. Residues 777–794 are Extracellular-facing; it reads SQILGTFSLPDKEEQRSQ. Residues 795–815 traverse the membrane as a helical segment; that stretch reads INGICLLFVTLGCVSFFTQFL. The Cytoplasmic portion of the chain corresponds to 816–869; the sequence is QGYTFAKSGELLTKRLRKFGFRAMLGQDIGWFDDLRNSPGALTTRLATDASQVQ. The next 2 helical transmembrane spans lie at 870 to 890 and 891 to 911; these read GATGSQIGMMVNSFTNVTVAM and IIAFLFSWKLTLGIVCFFPFL. Residues 912–979 are Cytoplasmic-facing; the sequence is ALSGALQTKM…PYKMAIKKAN (68 aa). A helical transmembrane segment spans residues 980 to 1000; sequence VYGLCFGFSQCITFIANSASY. At 1001 to 1011 the chain is on the extracellular side; the sequence is RYGGYLISNEG. The helical transmembrane segment at 1012-1032 threads the bilayer; that stretch reads LHFSYVFRVISAVVLSATALG. Over 1033–1321 the chain is Cytoplasmic; that stretch reads RASSYTPSYA…KLVTTGSPIS (289 aa). One can recognise an ABC transporter 2 domain in the interval 1078 to 1316; sequence IDFVDCKFTY…KGAYYKLVTT (239 aa). 1113–1120 lines the ATP pocket; sequence GSSGCGKS. Residues Ser-1214 and Ser-1321 each carry the phosphoserine modification.

It belongs to the ABC transporter superfamily. ABCB family. Multidrug resistance exporter (TC 3.A.1.201) subfamily. Interacts with HAX1. Interacts with the adapter protein complex 2 (AP-2) throught AP2A2 or AP2A1; this interaction regulates cell membrane expression of ABCB11 through its internalization in a clathrin-dependent manner and its subsequent degradation. Post-translationally, N-glycosylated. Ubiquitinated; short-chain ubiquitination regulates cell-Surface expression of ABCB11. As to expression, expressed predominantly, if not exclusively in the liver, where it was further localized to the canalicular microvilli and to subcanalicular vesicles of the hepatocytes by in situ.

Its subcellular location is the apical cell membrane. It localises to the recycling endosome membrane. The protein resides in the endosome. The protein localises to the cell membrane. The enzyme catalyses cholate(in) + ATP + H2O = cholate(out) + ADP + phosphate + H(+). It carries out the reaction taurocholate(in) + ATP + H2O = taurocholate(out) + ADP + phosphate + H(+). It catalyses the reaction glycocholate(in) + ATP + H2O = glycocholate(out) + ADP + phosphate + H(+). The catalysed reaction is glycochenodeoxycholate(in) + ATP + H2O = glycochenodeoxycholate(out) + ADP + phosphate + H(+). The enzyme catalyses taurochenodeoxycholate(in) + ATP + H2O = taurochenodeoxycholate(out) + ADP + phosphate + H(+). It carries out the reaction glycoursodeoxycholate(in) + ATP + H2O = glycoursodeoxycholate(out) + ADP + phosphate + H(+). It catalyses the reaction tauroursodeoxycholate(in) + ATP + H2O = tauroursodeoxycholate(out) + ADP + phosphate + H(+). The catalysed reaction is taurodeoxycholate(in) + ATP + H2O = taurodeoxycholate(out) + ADP + phosphate + H(+). The enzyme catalyses taurolithocholate 3-sulfate(in) + ATP + H2O = taurolithocholate 3-sulfate(out) + ADP + phosphate + H(+). It carries out the reaction pravastatin(in) + ATP + H2O = pravastatin(out) + ADP + phosphate + H(+). The uptake of taurocholate is inhibited by taurolithocholate sulfate with an IC(50) of 9 uM. Pravastatin competitively inhibits the transport of taurocholic acid. Cyclosporin A, glibenclamide, rifampicin and troglitazonestrongly competitively inhibit the transport activity of taurocholate. The canalicular transport activity of taurocholate is strongly dependent on canalicular membrane cholesterol content. The uptake of taurocholate is increased by short- and medium-chain fatty acids. Cholesterol increases transport capacity of taurocholate without affecting the affinity for the substrate. Catalyzes the transport of the major hydrophobic bile salts, such as taurine and glycine-conjugated cholic acid across the canalicular membrane of hepatocytes in an ATP-dependent manner, therefore participates in hepatic bile acid homeostasis and consequently to lipid homeostasis through regulation of biliary lipid secretion in a bile salts dependent manner. Transports taurine-conjugated bile salts more rapidly than glycine-conjugated bile salts. Also transports non-bile acid compounds, such as pravastatin and fexofenadine in an ATP-dependent manner and may be involved in their biliary excretion. The chain is Bile salt export pump from Oryctolagus cuniculus (Rabbit).